We begin with the raw amino-acid sequence, 515 residues long: Maturase K (515 aa).

It belongs to the intron maturase 2 family. MatK subfamily.

It localises to the plastid. It is found in the chloroplast. Functionally, usually encoded in the trnK tRNA gene intron. Probably assists in splicing its own and other chloroplast group II introns. This Picea pungens (Colorado spruce) protein is Maturase K.